A 486-amino-acid chain; its full sequence is Probable transporter MCH1 (486 aa).

12 consecutive transmembrane segments (helical) span residues 31 to 51 (IFAL…FSMY), 68 to 88 (SVSI…GYLG), 95 to 115 (YLAL…SGIF), 135 to 155 (EMAL…YASL), 174 to 194 (TYTP…SSLW), 211 to 231 (VAGI…IIFF), 268 to 288 (FFTD…GGPF), 312 to 333 (FSTH…VGFS), 349 to 369 (VIAL…FTVF), 377 to 397 (VVTI…PTIV), 409 to 429 (IWGS…LLFA), and 457 to 477 (FVIT…IWVF).

The protein belongs to the major facilitator superfamily.

Its subcellular location is the vacuole membrane. Probable transporter. In Yarrowia lipolytica (strain CLIB 122 / E 150) (Yeast), this protein is Probable transporter MCH1 (MCH1).